The chain runs to 427 residues: Dihydroorotase (427 aa).

Zn(2+) contacts are provided by H58 and H60. Substrate contacts are provided by residues 60-62 and N92; that span reads HLR. Zn(2+) is bound by residues D150, H177, and H230. N276 is a substrate binding site. D303 contributes to the Zn(2+) binding site. The active site involves D303. Residues H307 and 321-322 each bind substrate; that span reads FG.

The protein belongs to the metallo-dependent hydrolases superfamily. DHOase family. Class I DHOase subfamily. The cofactor is Zn(2+).

The catalysed reaction is (S)-dihydroorotate + H2O = N-carbamoyl-L-aspartate + H(+). It functions in the pathway pyrimidine metabolism; UMP biosynthesis via de novo pathway; (S)-dihydroorotate from bicarbonate: step 3/3. Functionally, catalyzes the reversible cyclization of carbamoyl aspartate to dihydroorotate. The protein is Dihydroorotase of Macrococcus caseolyticus (strain JCSC5402) (Macrococcoides caseolyticum).